The following is a 221-amino-acid chain: Octanoyltransferase (221 aa).

In terms of domain architecture, BPL/LPL catalytic spans 36–221 (KKEDNQLFFC…LRSIFMEIFA (186 aa)). Residues 81–88 (RGGDITYH), 154–156 (AIG), and 167–169 (GFA) contribute to the substrate site. Catalysis depends on Cys-185, which acts as the Acyl-thioester intermediate.

It belongs to the LipB family.

The protein resides in the cytoplasm. It carries out the reaction octanoyl-[ACP] + L-lysyl-[protein] = N(6)-octanoyl-L-lysyl-[protein] + holo-[ACP] + H(+). The protein operates within protein modification; protein lipoylation via endogenous pathway; protein N(6)-(lipoyl)lysine from octanoyl-[acyl-carrier-protein]: step 1/2. Catalyzes the transfer of endogenously produced octanoic acid from octanoyl-acyl-carrier-protein onto the lipoyl domains of lipoate-dependent enzymes. Lipoyl-ACP can also act as a substrate although octanoyl-ACP is likely to be the physiological substrate. The polypeptide is Octanoyltransferase (Parabacteroides distasonis (strain ATCC 8503 / DSM 20701 / CIP 104284 / JCM 5825 / NCTC 11152)).